A 167-amino-acid polypeptide reads, in one-letter code: Kininogen-1 (167 aa).

Positions 1–23 are cleaved as a signal peptide; that stretch reads MRLWFCLSFFIILCLEHFPGTLA.

It belongs to the bradykinin-related peptide family. Expressed by the skin glands.

The protein resides in the secreted. Functionally, vasodilator. Bradykinin produces in vitro relaxation of rat arterial smooth muscle and constriction of intestinal smooth muscle. May target bradykinin receptors (BDKRB). This is Kininogen-1 from Bombina orientalis (Oriental fire-bellied toad).